We begin with the raw amino-acid sequence, 580 residues long: Micronemal protein 4 (580 aa).

The first 25 residues, 1-25, serve as a signal peptide directing secretion; sequence MRASLPVHLVVCTQLSAVWFGVAKA. 6 Apple domains span residues 68–137, 141–214, 232–301, 305–375, 419–488, and 492–565; these read CVHS…SRSC, CFEQ…KQFC, CIQL…PKSC, CFSN…VTVG, CVHT…SRTC, and CLRR…YTFC. Disulfide bonds link Cys68-Cys137, Cys93-Cys115, Cys97-Cys103, Cys141-Cys214, Cys166-Cys188, Cys170-Cys176, Cys232-Cys301, Cys257-Cys279, Cys261-Cys267, Cys305-Cys380, Cys332-Cys354, Cys336-Cys342, Cys419-Cys488, Cys444-Cys466, and Cys448-Cys454.

As to quaternary structure, monomer. Part of the MIC6-MIC1-MIC4 complex. Interacts (via the second apple domain) directly with MIC1 (via the beta-finger region). Interacts with murine TLR2; the interaction promotes activation of bone marrow-derived dendritic cells and macrophages in the host. Interacts with murine TLR4; the interaction promotes activation of bone marrow-derived dendritic cells and macrophages in the host. In terms of processing, proteolytically cleaved at the N- and C-terminus after release from the microneme.

The protein resides in the cytoplasmic vesicle. The protein localises to the secretory vesicle. It localises to the microneme. Its subcellular location is the host early endosome. Lacto-N-biose inhibits binding to asialofetuin, a host glycoprotein. Its function is as follows. Soluble adhesin with carbohydrate-binding activity. Binds to galactose-terminating oligosaccharides. Required for attachment of the parasite to the host cell prior to invasion. Triggers the activation of murine bone marrow-derived dendritic cells and macrophages and production of pro-inflammatory cytokines, such as IL12 (IL12B/IL12A), in host TLR2/TLR4-dependent manner. Triggers the production of anti-inflammatory cytokine IL10 in murine bone marrow-derived macrophages in host TLR4-dependent manner. Induces transient endotoxin tolerance in murine bone marrow-derived macrophages, manifested by reduced TNF-alpha (TNF) production in response to challenge with lipopolysaccharides (LPS). The chain is Micronemal protein 4 from Toxoplasma gondii.